The primary structure comprises 570 residues: MSRLEAKKPSLCKTEPLTSEKVRSTLSVLKGVIASCYGPSGRLKQLHNGLGGCVYTTSQSSALLRNLSVTHPVLKILTSSVQNHVSCFSDCGLFTAILCCNLIENIQRLDLTPATAIKLNKYLLSLCTSYLKSEACSCRIPVDFRSTHTFLSLVHSILTSKPACMLTRKETDHIGALILKAFLLTIPESTEERMVLGKSIIVPLKGQRVTDSTVLPGLLIEASEVQLRRLLPTQKASGLRVALFCTSLSGDFSNAGEGVVVAHYQVSLENAVLEQLLNLGRRLVTDHVDLVLCQKVIHPSLKQFFSERHVMAIDRVGVTLMESLSKVTGATPIGSLNPIVSTTYGSVKDVCSARFGSKHFFHLLPNEATVCTLLLCSRNDTAWEELKLTCQTAMHVLQLTIKEPWVLLGGGCTETHLAAYVRHKVHHEAEAIVRDDGCTQAKLHVAAEAFCSALESVAGSLEHDGGEILIDTKYGHLWSCQADSASVGNWSDTLSRCGCGLYNSQEELSWSVLRSTYHPFAPQTCLPQAALGSASNLTVDCFTAKLSGLQVAVETANLILDLSYVIEDKN.

ATP is bound at residue 192–199 (ERMVLGKS). The segment at 198–370 (KSIIVPLKGQ…FHLLPNEATV (173 aa)) is substrate-binding apical domain.

The protein belongs to the TCP-1 chaperonin family. In terms of assembly, component of a complex composed at least of MKKS, BBS10, BBS12, TCP1, CCT2, CCT3, CCT4, CCT5 and CCT8. Interacts with STUB1. Interacts with BBS2 (via coiled coil domain). Interacts with CCDC28B. Interacts with BBS12. Interacts with SMARCC1, a component of the SWI/SNF complexes; the interaction takes place predominantly in the cytoplasm and may modulate SMARCC1 location. Interacts with DLEC1. Widely expressed in adult and fetal tissues. Expressed in the developing heart, brain retina, limb buds, as well as in the developing neural tube. Expressed in the embryo in the first and second branchial arches. Expressed in parafin embedded tissue sections of brain, kidney, retina, olfactory epithelium and the ependymal layer of ventricles. Detected only in restricted regions of these tissue sections, including the ciliated border of renal tubules, the connecting cilium and the inner and outer nuclear layers of retina, and the ciliated layer of olfactory epithelia.

Its subcellular location is the cytoplasm. It localises to the cytoskeleton. The protein localises to the microtubule organizing center. The protein resides in the centrosome. It is found in the cytosol. Its subcellular location is the nucleus. Probable molecular chaperone that assists the folding of proteins upon ATP hydrolysis. Plays a role in the assembly of BBSome, a complex involved in ciliogenesis regulating transports vesicles to the cilia. May play a role in protein processing in limb, cardiac and reproductive system development. May play a role in cytokinesis. The protein is Molecular chaperone MKKS (Mkks) of Mus musculus (Mouse).